We begin with the raw amino-acid sequence, 715 residues long: Fatty acid oxidation complex subunit alpha (715 aa).

The segment at M1–P190 is enoyl-CoA hydratase. Residues G306–N715 form a 3-hydroxyacyl-CoA dehydrogenase region.

The protein in the N-terminal section; belongs to the enoyl-CoA hydratase/isomerase family. In the central section; belongs to the 3-hydroxyacyl-CoA dehydrogenase family. As to quaternary structure, heterotetramer of two alpha chains (FadJ) and two beta chains (FadI).

It is found in the cytoplasm. It carries out the reaction a (3S)-3-hydroxyacyl-CoA = a (2E)-enoyl-CoA + H2O. It catalyses the reaction a 4-saturated-(3S)-3-hydroxyacyl-CoA = a (3E)-enoyl-CoA + H2O. The catalysed reaction is a (3S)-3-hydroxyacyl-CoA + NAD(+) = a 3-oxoacyl-CoA + NADH + H(+). The enzyme catalyses (3S)-3-hydroxybutanoyl-CoA = (3R)-3-hydroxybutanoyl-CoA. The protein operates within lipid metabolism; fatty acid beta-oxidation. Catalyzes the formation of a hydroxyacyl-CoA by addition of water on enoyl-CoA. Also exhibits 3-hydroxyacyl-CoA epimerase and 3-hydroxyacyl-CoA dehydrogenase activities. In Salmonella paratyphi B (strain ATCC BAA-1250 / SPB7), this protein is Fatty acid oxidation complex subunit alpha.